We begin with the raw amino-acid sequence, 1407 residues long: DNA-directed RNA polymerase subunit beta' (1407 aa).

The Zn(2+) site is built by C70, C72, C85, and C88. Residues D460, D462, and D464 each contribute to the Mg(2+) site. Residues C814, C888, C895, and C898 each coordinate Zn(2+).

It belongs to the RNA polymerase beta' chain family. As to quaternary structure, the RNAP catalytic core consists of 2 alpha, 1 beta, 1 beta' and 1 omega subunit. When a sigma factor is associated with the core the holoenzyme is formed, which can initiate transcription. Mg(2+) serves as cofactor. Requires Zn(2+) as cofactor.

It catalyses the reaction RNA(n) + a ribonucleoside 5'-triphosphate = RNA(n+1) + diphosphate. DNA-dependent RNA polymerase catalyzes the transcription of DNA into RNA using the four ribonucleoside triphosphates as substrates. In Citrobacter koseri (strain ATCC BAA-895 / CDC 4225-83 / SGSC4696), this protein is DNA-directed RNA polymerase subunit beta'.